The following is a 59-amino-acid chain: Preprotein translocase subunit SecG (59 aa).

Residues 1–35 (MPSSKKKKEDVPIASMAGLVRYYESEKEKVKISPK) lie on the Cytoplasmic side of the membrane. Residues 36–56 (VVVVASIVLIAGVIIASFIIP) traverse the membrane as a helical segment. Residues 57 to 59 (PPL) are Extracellular-facing.

Belongs to the SEC61-beta family. In terms of assembly, component of the protein translocase complex. Heterotrimer consisting of alpha (SecY), beta (SecG) and gamma (SecE) subunits. Can form oligomers of the heterotrimer.

The protein resides in the cell membrane. In terms of biological role, involved in protein export. The function of the beta subunit is unknown, but it may be involved in stabilization of the trimeric complex. This chain is Preprotein translocase subunit SecG, found in Sulfolobus acidocaldarius (strain ATCC 33909 / DSM 639 / JCM 8929 / NBRC 15157 / NCIMB 11770).